Reading from the N-terminus, the 272-residue chain is S-adenosylmethionine decarboxylase proenzyme (272 aa).

Catalysis depends on Ser-122, which acts as the Schiff-base intermediate with substrate; via pyruvic acid. Ser-122 is modified (pyruvic acid (Ser); by autocatalysis). His-127 functions as the Proton acceptor; for processing activity in the catalytic mechanism. Cys-150 functions as the Proton donor; for catalytic activity in the catalytic mechanism.

The protein belongs to the prokaryotic AdoMetDC family. Type 2 subfamily. In terms of assembly, heterooctamer of four alpha and four beta chains arranged as a tetramer of alpha/beta heterodimers. Pyruvate serves as cofactor. Post-translationally, is synthesized initially as an inactive proenzyme. Formation of the active enzyme involves a self-maturation process in which the active site pyruvoyl group is generated from an internal serine residue via an autocatalytic post-translational modification. Two non-identical subunits are generated from the proenzyme in this reaction, and the pyruvate is formed at the N-terminus of the alpha chain, which is derived from the carboxyl end of the proenzyme. The post-translation cleavage follows an unusual pathway, termed non-hydrolytic serinolysis, in which the side chain hydroxyl group of the serine supplies its oxygen atom to form the C-terminus of the beta chain, while the remainder of the serine residue undergoes an oxidative deamination to produce ammonia and the pyruvoyl group blocking the N-terminus of the alpha chain.

The catalysed reaction is S-adenosyl-L-methionine + H(+) = S-adenosyl 3-(methylsulfanyl)propylamine + CO2. It participates in amine and polyamine biosynthesis; S-adenosylmethioninamine biosynthesis; S-adenosylmethioninamine from S-adenosyl-L-methionine: step 1/1. Functionally, catalyzes the decarboxylation of S-adenosylmethionine to S-adenosylmethioninamine (dcAdoMet), the propylamine donor required for the synthesis of the polyamines spermine and spermidine from the diamine putrescine. The protein is S-adenosylmethionine decarboxylase proenzyme of Clostridium botulinum (strain Eklund 17B / Type B).